We begin with the raw amino-acid sequence, 863 residues long: Receptor-like protein 9DC3 (863 aa).

The N-terminal stretch at 1-21 (MGCVKLVFFMLYVFLFQLVSS) is a signal peptide. Residues 22–812 (SSLPHLCPED…EEDSPMISWQ (791 aa)) lie on the Extracellular side of the membrane. Positions 24-90 (LPHLCPEDQA…GVHCDETTGQ (67 aa)) are N-cap. N-linked (GlcNAc...) asparagine glycans are attached at residues asparagine 71 and asparagine 108. The LRR 1; degenerate repeat unit spans residues 91–114 (VIALDLRCSQLQGKFHSNSSLFQL). 2 LRR repeats span residues 115–138 (SNLKRLDLSNNNFIGSLISPKFGE) and 140–163 (SDLTHLDLSDSSFTGVIPSEISHL). Residues 164–190 (SKLHVLLIGDQYGLSIVPHNFEPLLKN) form an LRR 4; degenerate repeat. 3 N-linked (GlcNAc...) asparagine glycosylation sites follow: asparagine 190, asparagine 203, and asparagine 211. LRR repeat units lie at residues 191-213 (LTQLRELNLYEVNLSSTVPSNFS), 214-237 (SHLTTLQLSGTGLRGLLPERVFHL), 240-262 (LEFLDLSYNSQLMVRFPTTKWNS), 264-286 (ASLMKLYVHSVNIADRIPESFSH), 287-311 (LTSLHELDMGYTNLSGPIPKPLWNL), and 312-336 (TNIESLDLRYNHLEGPIPQLPIFEK). Asparagine 261 carries N-linked (GlcNAc...) asparagine glycosylation. N-linked (GlcNAc...) asparagine glycans are attached at residues asparagine 299 and asparagine 310. The LRR 11; degenerate repeat unit spans residues 337–357 (LKKLSLFRNDNLDGGLEFLSF). LRR repeat units lie at residues 358–382 (NTQLERLDLSSNSLTGPIPSNISGL), 383–406 (QNLECLYLSSNHLNGSIPSWIFSL), 408–428 (SLVELDLSNNTFSGKIQEFKS), 429–452 (KTLSAVTLKQNKLKGRIPNSLLNQ), 454–476 (NLQLLLLSHNNISGHISSAICNL), 477–500 (KTLILLDLGSNNLEGTIPQCVVER), 502–524 (EYLSHLDLSKNRLSGTINTTFSV), 525–549 (GNILRVISLHGNKLTGKVPRSLINC), 551–572 (YLALLDLGNNQLNDTFPNWLGH), 573–597 (LSQLKILSLRSNKLHGPIKSSGNTN), 599–623 (FTRLQIMDLSYNGFSGNLPESILGN), 667–690 (LDSNMIINLSKNRFEGRIPSIIGD), 691–714 (LVGLRTLNLSHNVLEGHIPASFQN), 715–739 (LSVLESLDLSSNKISGEIPQQLASL), and 741–759 (FLEVLNLSHNHLVGCIPKG). N-linked (GlcNAc...) asparagine glycans are attached at residues asparagine 378, asparagine 396, and asparagine 416. N-linked (GlcNAc...) asparagine glycosylation occurs at asparagine 464. N-linked (GlcNAc...) asparagine glycosylation occurs at asparagine 519. Asparagine 563 carries N-linked (GlcNAc...) asparagine glycosylation. Asparagine 674, asparagine 698, and asparagine 714 each carry an N-linked (GlcNAc...) asparagine glycan. Asparagine 746 and asparagine 767 each carry an N-linked (GlcNAc...) asparagine glycan. Residues 760–812 (KQFDSFGNTSYQGNDGLCGFPLSKLCGGDDQVTTPAELDQEEEEEDSPMISWQ) form a C-cap/acidic domain region. Residues 813–833 (GVLVGYGCGLVIGLSVIYIMW) form a helical membrane-spanning segment. The Cytoplasmic portion of the chain corresponds to 834–863 (STQYPAWFSRMHLKLEQIVTTRMKKHKKRY).

The protein belongs to the RLP family.

It localises to the cell membrane. Involved in plant defense. Confers resistance to the fungal pathogen C.fulvum through recognition of the AVR9 elicitor protein. The protein is Receptor-like protein 9DC3 of Solanum pimpinellifolium (Currant tomato).